A 114-amino-acid polypeptide reads, in one-letter code: Hydrogenase maturation factor HypA (114 aa).

Residue His-2 coordinates Ni(2+). Cys-73, Cys-76, Cys-90, and Cys-93 together coordinate Zn(2+).

The protein belongs to the HypA/HybF family.

Functionally, involved in the maturation of [NiFe] hydrogenases. Required for nickel insertion into the metal center of the hydrogenase. The sequence is that of Hydrogenase maturation factor HypA from Chloroflexus aurantiacus (strain ATCC 29366 / DSM 635 / J-10-fl).